Here is a 137-residue protein sequence, read N- to C-terminus: UPF0148 protein MJ0890 (137 aa).

The protein belongs to the UPF0148 family.

This is UPF0148 protein MJ0890 from Methanocaldococcus jannaschii (strain ATCC 43067 / DSM 2661 / JAL-1 / JCM 10045 / NBRC 100440) (Methanococcus jannaschii).